A 323-amino-acid chain; its full sequence is Serine/threonine-protein phosphatase PP1-gamma catalytic subunit B (323 aa).

Mn(2+) contacts are provided by aspartate 64, histidine 66, aspartate 92, and asparagine 124. Histidine 125 serves as the catalytic Proton donor. Positions 173 and 248 each coordinate Mn(2+). A disordered region spans residues 301–323 (KKKPNASRPVTPPRGIITKQAKK).

It belongs to the PPP phosphatase family. PP-1 subfamily. As to quaternary structure, PP1 comprises a catalytic subunit, ppp1c1, ppp1cb or ppp1cc, which is folded into its native form by inhibitor 2 and glycogen synthetase kinase 3, and then is complexed to one or several targeting or regulatory subunits. Mn(2+) serves as cofactor.

The protein localises to the cytoplasm. Its subcellular location is the nucleus. It is found in the cleavage furrow. The protein resides in the nucleolus. It localises to the nucleoplasm. The protein localises to the chromosome. Its subcellular location is the centromere. It is found in the kinetochore. The protein resides in the nucleus speckle. It localises to the midbody. The protein localises to the mitochondrion. It catalyses the reaction O-phospho-L-seryl-[protein] + H2O = L-seryl-[protein] + phosphate. The catalysed reaction is O-phospho-L-threonyl-[protein] + H2O = L-threonyl-[protein] + phosphate. Its function is as follows. Protein phosphatase that associates with over 200 regulatory proteins to form highly specific holoenzymes which dephosphorylate hundreds of biological targets. Protein phosphatase 1 (PP1) is essential for cell division, and participates in the regulation of glycogen metabolism, muscle contractility and protein synthesis. Promotes nuclear envelope reassembly by targeting nuclear membrane vesicles to chromatin at the end of mitosis. Acts by dephosphorylating membrane proteins such as lamin B receptor (lbr) to regulate the binding of membrane proteins to chromatin. This Xenopus laevis (African clawed frog) protein is Serine/threonine-protein phosphatase PP1-gamma catalytic subunit B (ppp1cc-b).